Here is a 147-residue protein sequence, read N- to C-terminus: Large ribosomal subunit protein uL15 (147 aa).

A disordered region spans residues 1–54; that stretch reads MKLFELQPAPGSKKLPNRKGRGIGSGNGKTGGRGHKGQNARAGGGVRPGFEGGQ. Composition is skewed to gly residues over residues 22–31 and 42–52; these read GIGSGNGKTG and AGGGVRPGFEG.

The protein belongs to the universal ribosomal protein uL15 family. As to quaternary structure, part of the 50S ribosomal subunit.

In terms of biological role, binds to the 23S rRNA. This is Large ribosomal subunit protein uL15 from Ruminiclostridium cellulolyticum (strain ATCC 35319 / DSM 5812 / JCM 6584 / H10) (Clostridium cellulolyticum).